A 47-amino-acid polypeptide reads, in one-letter code: Cytochrome b559 subunit beta (47 aa).

Residues 22–38 (WLAVHTLAIPTVFFLGA) traverse the membrane as a helical segment. Position 26 (His-26) interacts with heme.

This sequence belongs to the PsbE/PsbF family. As to quaternary structure, heterodimer of an alpha subunit and a beta subunit. PSII is composed of 1 copy each of membrane proteins PsbA, PsbB, PsbC, PsbD, PsbE, PsbF, PsbH, PsbI, PsbJ, PsbK, PsbL, PsbM, PsbT, PsbX, PsbY, PsbZ, Psb30/Ycf12, peripheral proteins PsbO, CyanoQ (PsbQ), PsbU, PsbV and a large number of cofactors. It forms dimeric complexes. Heme b serves as cofactor.

Its subcellular location is the cellular thylakoid membrane. Functionally, this b-type cytochrome is tightly associated with the reaction center of photosystem II (PSII). PSII is a light-driven water:plastoquinone oxidoreductase that uses light energy to abstract electrons from H(2)O, generating O(2) and a proton gradient subsequently used for ATP formation. It consists of a core antenna complex that captures photons, and an electron transfer chain that converts photonic excitation into a charge separation. This is Cytochrome b559 subunit beta from Synechococcus sp. (strain JA-3-3Ab) (Cyanobacteria bacterium Yellowstone A-Prime).